Consider the following 696-residue polypeptide: Carotenoid dioxygenase carX (696 aa).

Positions 1 to 16 (MKFLQQNSFTQTSMSQ) are enriched in polar residues. A disordered region spans residues 1–27 (MKFLQQNSFTQTSMSQPHEDVSPPLRH). Fe(2+) is bound by residues His-244, His-298, His-361, and His-642.

It belongs to the carotenoid oxygenase family. Fe(2+) is required as a cofactor.

The catalysed reaction is all-trans-beta-carotene + O2 = 2 all-trans-retinal. Its pathway is carotenoid biosynthesis. In terms of biological role, carotenoid dioxygenase; part of the car gene cluster that mediates the biosynthesis of neurosporaxanthin, a carboxylic apocarotenoid acting as an essential protective pigments and leading to orange pigmentation. CarX mediates the cleavage of beta-carotene produced by carAR into retinal, the rhodopsin's chromophore that is involved in the regulation of the carotenoid biosynthetic pathway via a negative feedback mechanism. It can also convert the synthetic compound beta-apo-8'-carotenal but not C35-apocarotenoids such as the acidic apocarotenoid neurosporaxanthin (C35), as well as its corresponding aldehyde beta-apo-4'-carotenal. This is Carotenoid dioxygenase carX from Gibberella fujikuroi (strain CBS 195.34 / IMI 58289 / NRRL A-6831) (Bakanae and foot rot disease fungus).